The sequence spans 368 residues: Alanine racemase (368 aa).

The active-site Proton acceptor; specific for D-alanine is the lysine 40. Lysine 40 is modified (N6-(pyridoxal phosphate)lysine). Arginine 136 contributes to the substrate binding site. Tyrosine 263 (proton acceptor; specific for L-alanine) is an active-site residue. Position 310 (methionine 310) interacts with substrate.

It belongs to the alanine racemase family. Requires pyridoxal 5'-phosphate as cofactor.

The catalysed reaction is L-alanine = D-alanine. It participates in amino-acid biosynthesis; D-alanine biosynthesis; D-alanine from L-alanine: step 1/1. Functionally, catalyzes the interconversion of L-alanine and D-alanine. May also act on other amino acids. In Streptococcus uberis (strain ATCC BAA-854 / 0140J), this protein is Alanine racemase (alr).